Here is a 459-residue protein sequence, read N- to C-terminus: ATP synthase subunit beta (459 aa).

Position 149-156 (149-156 (GGAGVGKT)) interacts with ATP.

It belongs to the ATPase alpha/beta chains family. F-type ATPases have 2 components, CF(1) - the catalytic core - and CF(0) - the membrane proton channel. CF(1) has five subunits: alpha(3), beta(3), gamma(1), delta(1), epsilon(1). CF(0) has three main subunits: a(1), b(2) and c(9-12). The alpha and beta chains form an alternating ring which encloses part of the gamma chain. CF(1) is attached to CF(0) by a central stalk formed by the gamma and epsilon chains, while a peripheral stalk is formed by the delta and b chains.

It localises to the cell inner membrane. The catalysed reaction is ATP + H2O + 4 H(+)(in) = ADP + phosphate + 5 H(+)(out). In terms of biological role, produces ATP from ADP in the presence of a proton gradient across the membrane. The catalytic sites are hosted primarily by the beta subunits. The polypeptide is ATP synthase subunit beta (Pseudomonas syringae pv. syringae (strain B728a)).